The sequence spans 290 residues: Pyridoxal kinase PdxY (290 aa).

Residues serine 12 and 47-48 each bind substrate; that span reads TQ. ATP contacts are provided by residues aspartate 114, glutamate 151, lysine 184, and 211-214; that span reads RPLL. Aspartate 225 lines the substrate pocket.

This sequence belongs to the pyridoxine kinase family. PdxY subfamily. In terms of assembly, homodimer. Requires Mg(2+) as cofactor.

It catalyses the reaction pyridoxal + ATP = pyridoxal 5'-phosphate + ADP + H(+). The protein operates within cofactor metabolism; pyridoxal 5'-phosphate salvage; pyridoxal 5'-phosphate from pyridoxal: step 1/1. Its function is as follows. Pyridoxal kinase involved in the salvage pathway of pyridoxal 5'-phosphate (PLP). Catalyzes the phosphorylation of pyridoxal to PLP. This is Pyridoxal kinase PdxY from Pseudomonas putida (strain W619).